The chain runs to 492 residues: UDP-N-acetylmuramate--L-alanine ligase (492 aa).

126–132 (GTHGKTT) provides a ligand contact to ATP.

Belongs to the MurCDEF family.

The protein localises to the cytoplasm. The enzyme catalyses UDP-N-acetyl-alpha-D-muramate + L-alanine + ATP = UDP-N-acetyl-alpha-D-muramoyl-L-alanine + ADP + phosphate + H(+). The protein operates within cell wall biogenesis; peptidoglycan biosynthesis. In terms of biological role, cell wall formation. The sequence is that of UDP-N-acetylmuramate--L-alanine ligase from Serratia proteamaculans (strain 568).